A 453-amino-acid polypeptide reads, in one-letter code: Pup--protein ligase (453 aa).

Position 9 (Glu-9) interacts with Mg(2+). An ATP-binding site is contributed by Arg-53. Tyr-55 lines the Mg(2+) pocket. Catalysis depends on Asp-57, which acts as the Proton acceptor. Glu-63 provides a ligand contact to Mg(2+). Thr-66 and Trp-420 together coordinate ATP.

It belongs to the Pup ligase/Pup deamidase family. Pup-conjugating enzyme subfamily.

It catalyses the reaction ATP + [prokaryotic ubiquitin-like protein]-L-glutamate + [protein]-L-lysine = ADP + phosphate + N(6)-([prokaryotic ubiquitin-like protein]-gamma-L-glutamyl)-[protein]-L-lysine.. The protein operates within protein degradation; proteasomal Pup-dependent pathway. It functions in the pathway protein modification; protein pupylation. Catalyzes the covalent attachment of the prokaryotic ubiquitin-like protein modifier Pup to the proteasomal substrate proteins, thereby targeting them for proteasomal degradation. This tagging system is termed pupylation. The ligation reaction involves the side-chain carboxylate of the C-terminal glutamate of Pup and the side-chain amino group of a substrate lysine. The sequence is that of Pup--protein ligase from Nocardioides sp. (strain ATCC BAA-499 / JS614).